Consider the following 186-residue polypeptide: Alkyl hydroperoxide reductase AhpD (186 aa).

Catalysis depends on Cys132, which acts as the Proton donor. Cys132 and Cys135 are disulfide-bonded. The active-site Cysteine sulfenic acid (-SOH) intermediate is the Cys135.

Belongs to the AhpD family.

It catalyses the reaction N(6)-[(R)-dihydrolipoyl]-L-lysyl-[lipoyl-carrier protein] + a hydroperoxide = N(6)-[(R)-lipoyl]-L-lysyl-[lipoyl-carrier protein] + an alcohol + H2O. Its function is as follows. Antioxidant protein with alkyl hydroperoxidase activity. Required for the reduction of the AhpC active site cysteine residues and for the regeneration of the AhpC enzyme activity. The chain is Alkyl hydroperoxide reductase AhpD from Anaeromyxobacter dehalogenans (strain 2CP-1 / ATCC BAA-258).